The sequence spans 388 residues: Chorismate synthase (388 aa).

Residues arginine 39 and arginine 45 each coordinate NADP(+). FMN contacts are provided by residues 130-132, 251-252, alanine 296, 311-315, and arginine 337; these read RSS, NA, and KPIPT.

Belongs to the chorismate synthase family. As to quaternary structure, homotetramer. FMNH2 serves as cofactor.

It catalyses the reaction 5-O-(1-carboxyvinyl)-3-phosphoshikimate = chorismate + phosphate. Its pathway is metabolic intermediate biosynthesis; chorismate biosynthesis; chorismate from D-erythrose 4-phosphate and phosphoenolpyruvate: step 7/7. Its function is as follows. Catalyzes the anti-1,4-elimination of the C-3 phosphate and the C-6 proR hydrogen from 5-enolpyruvylshikimate-3-phosphate (EPSP) to yield chorismate, which is the branch point compound that serves as the starting substrate for the three terminal pathways of aromatic amino acid biosynthesis. This reaction introduces a second double bond into the aromatic ring system. In Streptococcus equi subsp. zooepidemicus (strain H70), this protein is Chorismate synthase.